We begin with the raw amino-acid sequence, 323 residues long: RNA polymerase II holoenzyme cyclin-like subunit (323 aa).

Residues 45–176 form the Cyclin N-terminal domain; the sequence is DSKQNGIEQS…LLEELESYLI (132 aa).

The protein belongs to the cyclin family. Cyclin C subfamily. In terms of assembly, component of the SRB8-11 complex which consists of SRB8, SSN2/SRB9, SSN3/SRB10 and SSN8/SRB11. The SRB8-11 complex associates with the Mediator complex. The SSN3/SRB10 and SSN8/SRB11 kinase-cyclin pair also associate with the RNA polymerase II holoenzyme. Interacts with ASK10.

It is found in the nucleus. Functionally, component of the SRB8-11 complex. The SRB8-11 complex is a regulatory module of the Mediator complex which is itself involved in regulation of basal and activated RNA polymerase II-dependent transcription. The SRB8-11 complex may be involved in the transcriptional repression of a subset of genes regulated by Mediator. It may inhibit the association of the Mediator complex with RNA polymerase II to form the holoenzyme complex. The SRB8-11 complex phosphorylates the C-terminal domain (CTD) of the largest subunit of RNA polymerase II RPB1 at serines 2 and 5. The SSN3/SRB10 and SSN8/SRB11 kinase-cyclin pair may also positively and negatively regulate numerous transcriptional activators in response to changes in nutritional and physiological conditions. The sequence is that of RNA polymerase II holoenzyme cyclin-like subunit (SSN8) from Saccharomyces cerevisiae (strain ATCC 204508 / S288c) (Baker's yeast).